A 166-amino-acid chain; its full sequence is Regulator of ribonuclease activity A (166 aa).

It belongs to the RraA family. As to quaternary structure, homotrimer. Binds to both RNA-binding sites in the C-terminal region of Rne and to RhlB.

The protein resides in the cytoplasm. In terms of biological role, globally modulates RNA abundance by binding to RNase E (Rne) and regulating its endonucleolytic activity. Can modulate Rne action in a substrate-dependent manner by altering the composition of the degradosome. Modulates RNA-binding and helicase activities of the degradosome. The sequence is that of Regulator of ribonuclease activity A from Mannheimia succiniciproducens (strain KCTC 0769BP / MBEL55E).